Here is a 1574-residue protein sequence, read N- to C-terminus: Centrosomal protein of 170 kDa protein B (1574 aa).

The region spanning isoleucine 23 to isoleucine 73 is the FHA domain. 3 disordered regions span residues valine 121–glycine 258, aspartate 316–glutamine 395, and phenylalanine 409–glutamate 578. 3 stretches are compositionally biased toward basic and acidic residues: residues arginine 147–alanine 157, serine 182–aspartate 197, and leucine 325–valine 344. Phosphoserine is present on serine 360. The segment covering alanine 370–glutamate 382 has biased composition (low complexity). At serine 421 the chain carries Phosphoserine. Basic and acidic residues predominate over residues proline 430–proline 446. Residues alanine 452–serine 463 show a composition bias toward polar residues. The span at leucine 465–leucine 474 shows a compositional bias: basic and acidic residues. The segment covering glycine 475–phenylalanine 488 has biased composition (polar residues). Residues serine 478 and serine 490 each carry the phosphoserine modification. Pro residues predominate over residues glutamate 518–leucine 528. Serine 534 is subject to Phosphoserine. Phosphothreonine occurs at positions 540 and 541. Serine 595, serine 617, serine 653, serine 709, serine 744, serine 746, serine 749, serine 751, serine 819, and serine 843 each carry phosphoserine. Disordered stretches follow at residues proline 637–leucine 826, arginine 839–serine 882, serine 924–glycine 1300, alanine 1333–alanine 1358, asparagine 1377–threonine 1407, and asparagine 1510–alanine 1535. Positions phenylalanine 857–proline 867 are enriched in polar residues. Position 947 is a phosphoserine (serine 947). Residues aspartate 950–serine 959 are compositionally biased toward polar residues. 2 positions are modified to phosphoserine: serine 965 and serine 981. Residues alanine 996–histidine 1005 show a composition bias toward basic and acidic residues. Residues arginine 1084–leucine 1102 show a composition bias toward polar residues. Serine 1122 carries the phosphoserine modification. Over residues alanine 1134–glutamate 1146 the composition is skewed to low complexity. A phosphoserine mark is found at serine 1166 and serine 1186. The span at alanine 1199–alanine 1213 shows a compositional bias: low complexity. The span at histidine 1265–arginine 1282 shows a compositional bias: polar residues. Threonine 1289 carries the phosphothreonine modification. At serine 1341 the chain carries Phosphoserine. Composition is skewed to polar residues over residues proline 1344–alanine 1358 and serine 1385–asparagine 1396. Phosphothreonine is present on threonine 1345. At serine 1347 the chain carries Phosphoserine. Residues serine 1530 and serine 1533 each carry the phosphoserine modification.

This sequence belongs to the CEP170 family.

Its subcellular location is the cytoplasm. It localises to the cytoskeleton. Functionally, plays a role in microtubule organization. This chain is Centrosomal protein of 170 kDa protein B (Cep170b), found in Mus musculus (Mouse).